The following is a 404-amino-acid chain: Cysteine desulfurase IscS (404 aa).

Pyridoxal 5'-phosphate is bound by residues 75 to 76 (AT), Asn-155, Gln-183, and 203 to 205 (SAH). Residue Lys-206 is modified to N6-(pyridoxal phosphate)lysine. Thr-243 contributes to the pyridoxal 5'-phosphate binding site. Residue Cys-328 is the Cysteine persulfide intermediate of the active site. Cys-328 serves as a coordination point for [2Fe-2S] cluster.

The protein belongs to the class-V pyridoxal-phosphate-dependent aminotransferase family. NifS/IscS subfamily. As to quaternary structure, homodimer. Forms a heterotetramer with IscU, interacts with other sulfur acceptors. Pyridoxal 5'-phosphate is required as a cofactor.

Its subcellular location is the cytoplasm. It carries out the reaction (sulfur carrier)-H + L-cysteine = (sulfur carrier)-SH + L-alanine. It functions in the pathway cofactor biosynthesis; iron-sulfur cluster biosynthesis. Its function is as follows. Master enzyme that delivers sulfur to a number of partners involved in Fe-S cluster assembly, tRNA modification or cofactor biosynthesis. Catalyzes the removal of elemental sulfur atoms from cysteine to produce alanine. Functions as a sulfur delivery protein for Fe-S cluster synthesis onto IscU, an Fe-S scaffold assembly protein, as well as other S acceptor proteins. The chain is Cysteine desulfurase IscS from Aeromonas salmonicida (strain A449).